Here is a 299-residue protein sequence, read N- to C-terminus: Protein-methionine-sulfoxide reductase catalytic subunit MsrP (299 aa).

The segment at residues 1–44 is a signal peptide (tat-type signal); the sequence is MAHRWINDLTPADITPRGAWMNRRQVMAGMAGAGLAAFAGSAQA. Mo-molybdopterin is bound by residues N59, 62–63, C117, T152, N200, R205, and 216–218; these read YE and SIK.

It belongs to the MsrP family. Heterodimer of a catalytic subunit (MsrP) and a heme-binding subunit (MsrQ). Requires Mo-molybdopterin as cofactor. Post-translationally, predicted to be exported by the Tat system. The position of the signal peptide cleavage has not been experimentally proven.

Its subcellular location is the periplasm. The enzyme catalyses L-methionyl-[protein] + a quinone + H2O = L-methionyl-(S)-S-oxide-[protein] + a quinol. It catalyses the reaction L-methionyl-[protein] + a quinone + H2O = L-methionyl-(R)-S-oxide-[protein] + a quinol. Part of the MsrPQ system that repairs oxidized periplasmic proteins containing methionine sulfoxide residues (Met-O), using respiratory chain electrons. Thus protects these proteins from oxidative-stress damage caused by reactive species of oxygen and chlorine generated by the host defense mechanisms. MsrPQ is essential for the maintenance of envelope integrity under bleach stress, rescuing a wide series of structurally unrelated periplasmic proteins from methionine oxidation. The catalytic subunit MsrP is non-stereospecific, being able to reduce both (R-) and (S-) diastereoisomers of methionine sulfoxide. This is Protein-methionine-sulfoxide reductase catalytic subunit MsrP from Ruegeria pomeroyi (strain ATCC 700808 / DSM 15171 / DSS-3) (Silicibacter pomeroyi).